The primary structure comprises 460 residues: Tyrosine-protein phosphatase non-receptor type 18 (460 aa).

In terms of domain architecture, Tyrosine-protein phosphatase spans 26–291; that stretch reads LAGEFSDIQA…RFLYHTVAQM (266 aa). Residues Asp-197, 229-235, and Gln-276 contribute to the substrate site; that span reads CSAGCGR. Residue Cys-229 is the Phosphocysteine intermediate of the active site. The disordered stretch occupies residues 361 to 460; that stretch reads GAPAGAGSGT…RDPPAEWTRV (100 aa). A compositionally biased stretch (gly residues) spans 364–378; the sequence is AGAGSGTQTGTGTGT. Tyr-389 is subject to Phosphotyrosine. Thr-393 is subject to Phosphothreonine. Position 426 is a phosphotyrosine (Tyr-426). Over residues 449-460 the composition is skewed to basic and acidic residues; that stretch reads GPRDPPAEWTRV.

Belongs to the protein-tyrosine phosphatase family. Non-receptor class 4 subfamily. Interacts with PSTPIP1. Expressed in brain, colon and several tumor-derived cell lines.

It localises to the nucleus. The protein resides in the cytoplasm. It carries out the reaction O-phospho-L-tyrosyl-[protein] + H2O = L-tyrosyl-[protein] + phosphate. Its function is as follows. Differentially dephosphorylate autophosphorylated tyrosine kinases which are known to be overexpressed in tumor tissues. The protein is Tyrosine-protein phosphatase non-receptor type 18 (PTPN18) of Homo sapiens (Human).